The following is a 403-amino-acid chain: S-arrestin (403 aa).

Threonine 231 carries the post-translational modification Phosphothreonine. Residues 381 to 403 (RQNLKDTGENTEGKKDEDAGQDE) form a disordered region.

The protein belongs to the arrestin family. Monomer. Homodimer. Homotetramer. Interacts with RHO (via the phosphorylated C-terminus). In terms of tissue distribution, retina and pineal gland.

The protein localises to the cell projection. Its subcellular location is the cilium. The protein resides in the photoreceptor outer segment. It is found in the membrane. Functionally, binds to photoactivated, phosphorylated RHO and terminates RHO signaling via G-proteins by competing with G-proteins for the same binding site on RHO. May play a role in preventing light-dependent degeneration of retinal photoreceptor cells. This chain is S-arrestin (Sag), found in Rattus norvegicus (Rat).